We begin with the raw amino-acid sequence, 264 residues long: Thiazole synthase (264 aa).

Lys106 functions as the Schiff-base intermediate with DXP in the catalytic mechanism. Residues Gly167, Ala193–Gly194, and Asn215–Ser216 each bind 1-deoxy-D-xylulose 5-phosphate.

The protein belongs to the ThiG family. As to quaternary structure, homotetramer. Forms heterodimers with either ThiH or ThiS.

The protein localises to the cytoplasm. The enzyme catalyses [ThiS sulfur-carrier protein]-C-terminal-Gly-aminoethanethioate + 2-iminoacetate + 1-deoxy-D-xylulose 5-phosphate = [ThiS sulfur-carrier protein]-C-terminal Gly-Gly + 2-[(2R,5Z)-2-carboxy-4-methylthiazol-5(2H)-ylidene]ethyl phosphate + 2 H2O + H(+). It participates in cofactor biosynthesis; thiamine diphosphate biosynthesis. Its function is as follows. Catalyzes the rearrangement of 1-deoxy-D-xylulose 5-phosphate (DXP) to produce the thiazole phosphate moiety of thiamine. Sulfur is provided by the thiocarboxylate moiety of the carrier protein ThiS. In vitro, sulfur can be provided by H(2)S. In Prochlorococcus marinus (strain MIT 9312), this protein is Thiazole synthase.